Here is a 177-residue protein sequence, read N- to C-terminus: Large ribosomal subunit protein uL6 (177 aa).

This sequence belongs to the universal ribosomal protein uL6 family. In terms of assembly, part of the 50S ribosomal subunit.

Its function is as follows. This protein binds to the 23S rRNA, and is important in its secondary structure. It is located near the subunit interface in the base of the L7/L12 stalk, and near the tRNA binding site of the peptidyltransferase center. The protein is Large ribosomal subunit protein uL6 of Allorhizobium ampelinum (strain ATCC BAA-846 / DSM 112012 / S4) (Agrobacterium vitis (strain S4)).